Here is a 979-residue protein sequence, read N- to C-terminus: Glycine dehydrogenase (decarboxylating) (979 aa).

K726 is modified (N6-(pyridoxal phosphate)lysine).

Belongs to the GcvP family. In terms of assembly, the glycine cleavage system is composed of four proteins: P, T, L and H. Pyridoxal 5'-phosphate serves as cofactor.

The enzyme catalyses N(6)-[(R)-lipoyl]-L-lysyl-[glycine-cleavage complex H protein] + glycine + H(+) = N(6)-[(R)-S(8)-aminomethyldihydrolipoyl]-L-lysyl-[glycine-cleavage complex H protein] + CO2. Functionally, the glycine cleavage system catalyzes the degradation of glycine. The P protein binds the alpha-amino group of glycine through its pyridoxal phosphate cofactor; CO(2) is released and the remaining methylamine moiety is then transferred to the lipoamide cofactor of the H protein. The protein is Glycine dehydrogenase (decarboxylating) of Ralstonia pickettii (strain 12J).